Here is a 545-residue protein sequence, read N- to C-terminus: Eukaryotic translation initiation factor 3 subunit D-2 (545 aa).

The interval 94–148 is disordered; that stretch reads FQRGRFRGNTRNNPRTRGRTGRGGAVTGTGGNQPGVGVNERTKYGKGRDNRRQMG. Residues 95 to 113 show a composition bias toward basic residues; that stretch reads QRGRFRGNTRNNPRTRGRT. A compositionally biased stretch (gly residues) spans 114–127; it reads GRGGAVTGTGGNQP. The span at 133 to 145 shows a compositional bias: basic and acidic residues; the sequence is ERTKYGKGRDNRR. The tract at residues 287–301 is RNA gate; the sequence is QFDLLTVNETALEPP.

Belongs to the eIF-3 subunit D family. As to quaternary structure, component of the eukaryotic translation initiation factor 3 (eIF-3) complex. The eIF-3 complex interacts with pix.

It is found in the cytoplasm. MRNA cap-binding component of the eukaryotic translation initiation factor 3 (eIF-3) complex, which is involved in protein synthesis of a specialized repertoire of mRNAs and, together with other initiation factors, stimulates binding of mRNA and methionyl-tRNAi to the 40S ribosome. The eIF-3 complex specifically targets and initiates translation of a subset of mRNAs involved in cell proliferation. In the eIF-3 complex, eif3d specifically recognizes and binds the 7-methylguanosine cap of a subset of mRNAs. The chain is Eukaryotic translation initiation factor 3 subunit D-2 from Drosophila pseudoobscura pseudoobscura (Fruit fly).